The primary structure comprises 196 residues: Peptidyl-tRNA hydrolase (196 aa).

TRNA is bound at residue tyrosine 18. Histidine 23 (proton acceptor) is an active-site residue. TRNA is bound by residues phenylalanine 69, asparagine 71, and asparagine 117.

It belongs to the PTH family. Monomer.

It is found in the cytoplasm. The catalysed reaction is an N-acyl-L-alpha-aminoacyl-tRNA + H2O = an N-acyl-L-amino acid + a tRNA + H(+). In terms of biological role, hydrolyzes ribosome-free peptidyl-tRNAs (with 1 or more amino acids incorporated), which drop off the ribosome during protein synthesis, or as a result of ribosome stalling. Catalyzes the release of premature peptidyl moieties from peptidyl-tRNA molecules trapped in stalled 50S ribosomal subunits, and thus maintains levels of free tRNAs and 50S ribosomes. The protein is Peptidyl-tRNA hydrolase of Aliivibrio fischeri (strain MJ11) (Vibrio fischeri).